Consider the following 485-residue polypeptide: Isocitrate dehydrogenase [NADP], chloroplastic/mitochondrial (485 aa).

The transit peptide at 1 to 65 (MLNKLTHGVF…VQFHRASAVR (65 aa)) directs the protein to the chloroplast and mitochondrion. NADP(+) contacts are provided by residues 147 to 149 (TIT) and arginine 154. Threonine 149 lines the substrate pocket. Substrate-binding positions include 166-172 (SPNGTIR), arginine 181, and arginine 204. Aspartate 323 contributes to the Mn(2+) binding site. Lysine 331 is an NADP(+) binding site. Aspartate 346 is a binding site for Mn(2+). Residues 381-386 (GTVTRH) and asparagine 399 contribute to the NADP(+) site.

This sequence belongs to the isocitrate and isopropylmalate dehydrogenases family. Mg(2+) serves as cofactor. It depends on Mn(2+) as a cofactor.

It localises to the plastid. The protein localises to the chloroplast. The protein resides in the mitochondrion. The enzyme catalyses D-threo-isocitrate + NADP(+) = 2-oxoglutarate + CO2 + NADPH. Functionally, may be involved in response to oxidative stresses. The sequence is that of Isocitrate dehydrogenase [NADP], chloroplastic/mitochondrial from Arabidopsis thaliana (Mouse-ear cress).